Reading from the N-terminus, the 97-residue chain is Aspartyl/glutamyl-tRNA(Asn/Gln) amidotransferase subunit C (97 aa).

It belongs to the GatC family. In terms of assembly, heterotrimer of A, B and C subunits.

It carries out the reaction L-glutamyl-tRNA(Gln) + L-glutamine + ATP + H2O = L-glutaminyl-tRNA(Gln) + L-glutamate + ADP + phosphate + H(+). The enzyme catalyses L-aspartyl-tRNA(Asn) + L-glutamine + ATP + H2O = L-asparaginyl-tRNA(Asn) + L-glutamate + ADP + phosphate + 2 H(+). Functionally, allows the formation of correctly charged Asn-tRNA(Asn) or Gln-tRNA(Gln) through the transamidation of misacylated Asp-tRNA(Asn) or Glu-tRNA(Gln) in organisms which lack either or both of asparaginyl-tRNA or glutaminyl-tRNA synthetases. The reaction takes place in the presence of glutamine and ATP through an activated phospho-Asp-tRNA(Asn) or phospho-Glu-tRNA(Gln). In Prochlorococcus marinus (strain MIT 9215), this protein is Aspartyl/glutamyl-tRNA(Asn/Gln) amidotransferase subunit C.